The primary structure comprises 271 residues: Beta-lysine N(6)-acetyltransferase (271 aa).

The tract at residues 86–122 is disordered; it reads LRKDRGTGKNQKKKKISRKKDNWKKRKEKSRLPEGYT. The span at 95–114 shows a compositional bias: basic residues; sequence NQKKKKISRKKDNWKKRKEK. Positions 121-269 constitute an N-acetyltransferase domain; it reads YTLRPAVQAD…GFEDMNIWCR (149 aa).

Belongs to the acetyltransferase family.

It carries out the reaction (3S)-3,6-diaminohexanoate + acetyl-CoA = (3S)-6-acetamido-3-aminohexanoate + CoA + H(+). Catalyzes the acetylation of beta-lysine to N6-acetyl-beta-lysine, a compatible solute produced by methanogenic archaea that helps cells to cope with salt stress. The protein is Beta-lysine N(6)-acetyltransferase of Methanosarcina mazei (strain ATCC BAA-159 / DSM 3647 / Goe1 / Go1 / JCM 11833 / OCM 88) (Methanosarcina frisia).